The chain runs to 299 residues: Serine/threonine-protein kinase 1 (299 aa).

The 239-residue stretch at 39 to 277 (IATKPMFEGG…FKGLVSHPWF (239 aa)) folds into the Protein kinase domain. Residues 45–53 (FEGGRRNNV) and K66 each bind ATP. D153 (proton acceptor) is an active-site residue.

It belongs to the protein kinase superfamily. Ser/Thr protein kinase family.

The protein localises to the virion. The protein resides in the host cytoplasm. The catalysed reaction is L-seryl-[protein] + ATP = O-phospho-L-seryl-[protein] + ADP + H(+). The enzyme catalyses L-threonyl-[protein] + ATP = O-phospho-L-threonyl-[protein] + ADP + H(+). Essential for viral replication. It may mediate the virus progression through DNA replication. This chain is Serine/threonine-protein kinase 1, found in African swine fever virus (isolate Pig/Kenya/KEN-50/1950) (ASFV).